A 44-amino-acid chain; its full sequence is Phosphatase RapA inhibitor (44 aa).

A propeptide spanning residues 1–39 (MKSKWMSGLLLVAVGFSFTQVMVHAGETANTEGKTFHIA) is cleaved from the precursor.

It belongs to the Phr family. Interacts with RapA and inhibits its interaction with Spo0F. Secreted with a propeptide domain, which is cleaved in the cell wall by the secreted serine proteases subtilisin and Vpr to produce a mature signaling peptide. Contains a predicted signal peptide cleavage site in the N-terminal region, however the propeptide is probably subject to only one processing event, at the N-terminal end of the mature peptide.

The protein localises to the secreted. Its subcellular location is the cytoplasm. With respect to regulation, inhibition of RapA requires a free carboxylate group at the C-terminal end of the PhrA pentapeptide. A free C-terminal carboxylic acid PhrA pentapeptide inhibits RapA phosphatase activity at a 1:1 ratio and is approximately 200 fold more active than a C-terminal amide peptide. Functionally, signaling molecule involved in the regulation of sporulation. Secreted during production, but the mature peptide acts intracellularly, indicating that it needs to be imported into the cell to function. Inhibitor of the RapA phosphatase activity. Does not act on RapB. In Bacillus subtilis (strain 168), this protein is Phosphatase RapA inhibitor.